Consider the following 285-residue polypeptide: SLAM family member 9 (285 aa).

An N-terminal signal peptide occupies residues 1–17; the sequence is MGALLWSLLLLLQEAKG. Residues 18-232 are Extracellular-facing; it reads FSGDDEDPEE…YPEKPSMLCL (215 aa). The 102-residue stretch at 25 to 126 folds into the Ig-like V-type domain; it reads PEEVIGVLQE…SHITKSYHLR (102 aa). N-linked (GlcNAc...) asparagine glycans are attached at residues Asn-37, Asn-97, Asn-141, Asn-149, Asn-175, and Asn-206. The Ig-like C2-type domain maps to 134 to 213; it reads PHITVNSNIS…VSNISSRRIS (80 aa). Residues Cys-154 and Cys-198 are joined by a disulfide bond. A helical membrane pass occupies residues 233 to 253; the sequence is LVKSLFLLLLLAILTVGLCLF. At 254-285 the chain is on the cytoplasmic side; the sequence is RAQKSYETPRVRKLKRNRIKLRKKGKSGPTPV.

The protein resides in the membrane. Functionally, may play a role in the immune response. This is SLAM family member 9 (Slamf9) from Mus musculus (Mouse).